Reading from the N-terminus, the 402-residue chain is Subtilisin-like protease 9 (402 aa).

A signal peptide spans 1–18 (MGFFRILFSLSLCALSLA). The propeptide occupies 19–120 (IPSKLIGLEN…VEVDRVVKLD (102 aa)). The 84-residue stretch at 36-119 (SYIVVMKSAV…YVEVDRVVKL (84 aa)) folds into the Inhibitor I9 domain. Residues 130 to 402 (SWGLGRISHR…KKLLYNGSGA (273 aa)) form the Peptidase S8 domain. Active-site charge relay system residues include D162 and H193. N-linked (GlcNAc...) asparagine glycosylation occurs at N254. The active-site Charge relay system is S348. Residues N390 and N398 are each glycosylated (N-linked (GlcNAc...) asparagine).

Belongs to the peptidase S8 family.

The protein resides in the secreted. Its function is as follows. Secreted subtilisin-like serine protease with keratinolytic activity that contributes to pathogenicity. The protein is Subtilisin-like protease 9 (SUB9) of Arthroderma gypseum (strain ATCC MYA-4604 / CBS 118893) (Microsporum gypseum).